Consider the following 149-residue polypeptide: Arginine repressor (149 aa).

The protein belongs to the ArgR family.

Its subcellular location is the cytoplasm. Its pathway is amino-acid biosynthesis; L-arginine biosynthesis [regulation]. In terms of biological role, regulates arginine biosynthesis genes. The sequence is that of Arginine repressor from Exiguobacterium sp. (strain ATCC BAA-1283 / AT1b).